We begin with the raw amino-acid sequence, 148 residues long: UPF0756 membrane protein ESA_02180 (148 aa).

Transmembrane regions (helical) follow at residues 4 to 24, 51 to 71, 86 to 106, and 112 to 132; these read ITLL…NMAV, VTVG…SGTL, LVAI…VALM, and IVAG…GVPV.

This sequence belongs to the UPF0756 family.

It is found in the cell membrane. The chain is UPF0756 membrane protein ESA_02180 from Cronobacter sakazakii (strain ATCC BAA-894) (Enterobacter sakazakii).